A 660-amino-acid chain; its full sequence is Transcription activator of gluconeogenesis CHGG_09150 (660 aa).

Residues 1-12 are compositionally biased toward acidic residues; sequence MSDSENEYDETD. Residues 1-52 are disordered; that stretch reads MSDSENEYDETDQLVKEEDEKMSDQRLTSEGADTSAEPKKKYDPKDPLRPRR. Basic and acidic residues-rich tracts occupy residues 13–24 and 36–49; these read QLVKEEDEKMSD and AEPK…DPLR. The segment at residues 59-87 is a DNA-binding region (zn(2)-C6 fungal-type); it reads CFACQRAHLTCGDERPCQRCIKRNLMESC. 3 disordered regions span residues 98 to 144, 170 to 191, and 319 to 368; these read LHDA…TFFS, FANQ…QISG, and PTSI…RQSN. A compositionally biased stretch (polar residues) spans 129-144; it reads SIQTSEASSNQGTFFS. The span at 173–184 shows a compositional bias: low complexity; that stretch reads QQSPTSPSFQTS. Composition is skewed to polar residues over residues 320-332 and 344-368; these read TSIQ…TNSP and TMAT…RQSN. Residues 455–526 form the PAS domain; that stretch reads SLLEYEEFMH…NSKARVGLAT (72 aa). A disordered region spans residues 587-613; sequence APDKDDGTGESSTDGQLPQKDPRNSIL.

The protein belongs to the ERT1/acuK family.

Its subcellular location is the nucleus. Its function is as follows. Transcription factor which regulates nonfermentable carbon utilization. Activator of gluconeogenetic genes. The chain is Transcription activator of gluconeogenesis CHGG_09150 from Chaetomium globosum (strain ATCC 6205 / CBS 148.51 / DSM 1962 / NBRC 6347 / NRRL 1970) (Soil fungus).